A 473-amino-acid chain; its full sequence is Zinc finger and BTB domain-containing protein 9 (473 aa).

Residues 48–112 enclose the BTB domain; that stretch reads CDVSLLVQGR…IYSGRLRLPL (65 aa). Residues 177 to 279 form a disordered region; the sequence is QTPVQSSAST…LELPAPPALP (103 aa). Over residues 182 to 196 the composition is skewed to low complexity; it reads SSASTESPASTESPV. A compositionally biased stretch (acidic residues) spans 211-226; that stretch reads VEEEEEEEEDDDDEDQ. The span at 227–239 shows a compositional bias: polar residues; the sequence is GSATLSQTPQPQR. Lysine 286 participates in a covalent cross-link: Glycyl lysine isopeptide (Lys-Gly) (interchain with G-Cter in SUMO1); alternate. A Glycyl lysine isopeptide (Lys-Gly) (interchain with G-Cter in SUMO2); alternate cross-link involves residue lysine 286. Glycyl lysine isopeptide (Lys-Gly) (interchain with G-Cter in SUMO2) cross-links involve residues lysine 293 and lysine 307. The segment at 293–376 is disordered; it reads KEEISGSGTQ…VHGPVKLGGT (84 aa). The segment covering 355–364 has biased composition (gly residues); it reads SGGGGPGGAG. Lysine 382 is covalently cross-linked (Glycyl lysine isopeptide (Lys-Gly) (interchain with G-Cter in SUMO2)). The segment at 411 to 433 adopts a C2H2-type 1 zinc-finger fold; the sequence is FGCGICNKRFKLKHHLTEHMKTH. The C2H2-type 2; atypical zinc finger occupies 438-460; it reads HACPHCGRRFRVHACFLRHRDLC.

It is found in the nucleus. May be involved in transcriptional regulation. This Homo sapiens (Human) protein is Zinc finger and BTB domain-containing protein 9 (ZBTB9).